Consider the following 539-residue polypeptide: Lysosomal cobalamin transport escort protein LMBD1 (539 aa).

Topologically, residues 1–7 are extracellular; that stretch reads MATGSTE. A helical membrane pass occupies residues 8–28; it reads LLIGWCIFGVLLLAILAFCWV. The Cytoplasmic portion of the chain corresponds to 29-47; it reads YVRKYQSHQESEVISTITA. The helical transmembrane segment at 48 to 68 threads the bilayer; it reads ISSLAIALITSALLPVDIFLV. Residues 69-98 are Extracellular-facing; that stretch reads SFMKNHNGTFKDWAESNTTRLQIENTVLIG. Asn-75 and Asn-85 each carry an N-linked (GlcNAc...) asparagine glycan. A helical transmembrane segment spans residues 99–119; that stretch reads YYTLYSIILFCVFLWIPFVYF. At 120-142 the chain is on the cytoplasmic side; sequence YYEEKDDTDGSQCSQIANAFKYT. The helical transmembrane segment at 143 to 163 threads the bilayer; the sequence is SGFILVCSCLLLIGAFAPLDI. The Extracellular segment spans residues 164–186; sequence HTNKNSTDLDKIKLLFLELGSSN. A glycan (N-linked (GlcNAc...) asparagine) is linked at Asn-168. The helical transmembrane segment at 187–207 threads the bilayer; the sequence is GLAALSFSISSLTLIGMLAAI. Residues 208-303 lie on the Cytoplasmic side of the membrane; the sequence is TYTAYGMSAL…KCCIVIRPFK (96 aa). Residues 304–324 form a helical membrane-spanning segment; it reads IIWGILFILVALLFIVSLFLS. The Extracellular segment spans residues 325–362; that stretch reads NLDKALHSAGIDSGFIIFGTNLTNPLNMLLPVLQTVFP. Asn-345 is a glycosylation site (N-linked (GlcNAc...) asparagine). The helical transmembrane segment at 363 to 383 threads the bilayer; sequence LDYIFITIITMYFIFTSMAGI. At 384-406 the chain is on the cytoplasmic side; sequence RNMGIWFFWIRLYKIRRRRTRPQ. A helical transmembrane segment spans residues 407 to 427; it reads ALLFLCMILLLIVLHTSYMIY. Over 428 to 484 the chain is Extracellular; the sequence is SLAPQYVMYGSQKYLWENNSTQETAIGNSSASVLKDCDASAPEDQCTVTRTYLFLHK. Asn-445, Asn-446, and Asn-455 each carry an N-linked (GlcNAc...) asparagine glycan. The helical transmembrane segment at 485–505 threads the bilayer; sequence FWFFSSIYYFGNWAFIVVFVI. Residues 506–539 lie on the Cytoplasmic side of the membrane; the sequence is GLIVSCCKGKKSVIEGEVEDDDSDLSDDEEHPYA.

The protein belongs to the LIMR family. LMBRD1 subfamily.

The protein localises to the endoplasmic reticulum membrane. It localises to the lysosome membrane. It is found in the cell membrane. Functionally, lysosomal membrane chaperone required to export cobalamin (vitamin B12) from the lysosome to the cytosol, allowing its conversion to cofactors. Targets ABCD4 transporter from the endoplasmic reticulum to the lysosome. Then forms a complex with lysosomal ABCD4 and cytoplasmic MMACHC to transport cobalamin across the lysosomal membrane. May play a role in mediating and regulating the internalization of the insulin receptor. The sequence is that of Lysosomal cobalamin transport escort protein LMBD1 (lmbrd1) from Xenopus tropicalis (Western clawed frog).